Here is a 547-residue protein sequence, read N- to C-terminus: CTP synthase (547 aa).

Positions 1 to 265 (MARFIFITGG…DQAVLDAFQI (265 aa)) are amidoligase domain. S13 contacts CTP. Position 13 (S13) interacts with UTP. ATP contacts are provided by residues 14 to 19 (SLGKGL) and D71. Residues D71 and E139 each contribute to the Mg(2+) site. Residues 146–148 (DIE), 186–191 (KTKPTQ), and K222 contribute to the CTP site. UTP is bound by residues 186–191 (KTKPTQ) and K222. The Glutamine amidotransferase type-1 domain occupies 291–546 (KIAIVGKYVQ…VRAAKESSRL (256 aa)). Residue G353 coordinates L-glutamine. C380 serves as the catalytic Nucleophile; for glutamine hydrolysis. L-glutamine is bound by residues 381-384 (LGMQ), E404, and R474. Catalysis depends on residues H519 and E521.

This sequence belongs to the CTP synthase family. As to quaternary structure, homotetramer.

The enzyme catalyses UTP + L-glutamine + ATP + H2O = CTP + L-glutamate + ADP + phosphate + 2 H(+). The catalysed reaction is L-glutamine + H2O = L-glutamate + NH4(+). It carries out the reaction UTP + NH4(+) + ATP = CTP + ADP + phosphate + 2 H(+). The protein operates within pyrimidine metabolism; CTP biosynthesis via de novo pathway; CTP from UDP: step 2/2. With respect to regulation, allosterically activated by GTP, when glutamine is the substrate; GTP has no effect on the reaction when ammonia is the substrate. The allosteric effector GTP functions by stabilizing the protein conformation that binds the tetrahedral intermediate(s) formed during glutamine hydrolysis. Inhibited by the product CTP, via allosteric rather than competitive inhibition. In terms of biological role, catalyzes the ATP-dependent amination of UTP to CTP with either L-glutamine or ammonia as the source of nitrogen. Regulates intracellular CTP levels through interactions with the four ribonucleotide triphosphates. This is CTP synthase from Ruegeria pomeroyi (strain ATCC 700808 / DSM 15171 / DSS-3) (Silicibacter pomeroyi).